The following is a 454-amino-acid chain: uncharacterized protein (454 aa).

Residues 364 to 405 (CSRPGCDAPAYHSEVHHVTPWTTTHRTDINDLTLACGPDNRL) form the HNH domain.

It belongs to the Rv1128c/1148c/1588c/1702c/1945/3466 family.

This is an uncharacterized protein from Mycobacterium tuberculosis (strain CDC 1551 / Oshkosh).